The chain runs to 555 residues: CTP synthase (555 aa).

Residues 1-271 (MVKRGKKTKY…DDKLAELFNI (271 aa)) form an amidoligase domain region. Serine 19 is a binding site for CTP. A UTP-binding site is contributed by serine 19. ATP contacts are provided by residues 20-25 (SLGKGL) and aspartate 77. Aspartate 77 and glutamate 145 together coordinate Mg(2+). Residues 152-154 (DIE), 192-197 (KTKPTQ), and lysine 228 each bind CTP. UTP-binding positions include 192–197 (KTKPTQ) and lysine 228. The region spanning 297-537 (RIGIVGKYVE…VKAALEHRDA (241 aa)) is the Glutamine amidotransferase type-1 domain. Glycine 358 provides a ligand contact to L-glutamine. The active-site Nucleophile; for glutamine hydrolysis is the cysteine 385. Residues 386–389 (LGLQ), glutamate 409, and arginine 466 each bind L-glutamine. Catalysis depends on residues histidine 510 and glutamate 512. Positions 535-555 (RDAQQRQPPAEVKKLAVGKNG) are disordered.

The protein belongs to the CTP synthase family. As to quaternary structure, homotetramer.

It catalyses the reaction UTP + L-glutamine + ATP + H2O = CTP + L-glutamate + ADP + phosphate + 2 H(+). The enzyme catalyses L-glutamine + H2O = L-glutamate + NH4(+). It carries out the reaction UTP + NH4(+) + ATP = CTP + ADP + phosphate + 2 H(+). It functions in the pathway pyrimidine metabolism; CTP biosynthesis via de novo pathway; CTP from UDP: step 2/2. Its activity is regulated as follows. Allosterically activated by GTP, when glutamine is the substrate; GTP has no effect on the reaction when ammonia is the substrate. The allosteric effector GTP functions by stabilizing the protein conformation that binds the tetrahedral intermediate(s) formed during glutamine hydrolysis. Inhibited by the product CTP, via allosteric rather than competitive inhibition. Catalyzes the ATP-dependent amination of UTP to CTP with either L-glutamine or ammonia as the source of nitrogen. Regulates intracellular CTP levels through interactions with the four ribonucleotide triphosphates. In Anaeromyxobacter sp. (strain K), this protein is CTP synthase.